The sequence spans 323 residues: Galectin-4 (323 aa).

Galectin domains follow at residues 19–150 and 194–323; these read YYKP…INFI and YKTR…YVQI. A beta-D-galactoside is bound at residue 256-262; the sequence is WGAEERK.

In terms of assembly, monomer.

Galectin that binds lactose and a related range of sugars. May be involved in the assembly of adherens junctions. This is Galectin-4 (LGALS4) from Sus scrofa (Pig).